The primary structure comprises 141 residues: Hemoglobin subunit alpha-D (141 aa).

Residues 1–141 (MLTAEDKKLI…VSAVLAEKYR (141 aa)) enclose the Globin domain. Residues histidine 58 and histidine 87 each contribute to the heme b site.

It belongs to the globin family. In terms of assembly, heterotetramer of two alpha-D chains and two beta chains. Red blood cells.

In terms of biological role, involved in oxygen transport from the lung to the various peripheral tissues. In Meleagris gallopavo (Wild turkey), this protein is Hemoglobin subunit alpha-D (HBAD).